The chain runs to 214 residues: Adenylate kinase (214 aa).

10–15 (GAGKGT) serves as a coordination point for ATP. Positions 30–59 (STGDMLRAAIKAGSELGNKAKAVMDAGQLV) are NMP. AMP-binding positions include Thr31, Arg36, 57–59 (QLV), 85–88 (GFPR), and Gln92. The LID stretch occupies residues 122-159 (GRRVHSGSGRVYHLVYNPPKVEGKDDVSGDDLSIRPDD). ATP contacts are provided by residues Arg123 and 132–133 (VY). Positions 156 and 167 each coordinate AMP. Gln200 serves as a coordination point for ATP.

This sequence belongs to the adenylate kinase family. As to quaternary structure, monomer.

Its subcellular location is the cytoplasm. The catalysed reaction is AMP + ATP = 2 ADP. Its pathway is purine metabolism; AMP biosynthesis via salvage pathway; AMP from ADP: step 1/1. In terms of biological role, catalyzes the reversible transfer of the terminal phosphate group between ATP and AMP. Plays an important role in cellular energy homeostasis and in adenine nucleotide metabolism. This is Adenylate kinase from Colwellia psychrerythraea (strain 34H / ATCC BAA-681) (Vibrio psychroerythus).